We begin with the raw amino-acid sequence, 122 residues long: Large ribosomal subunit protein uL14 (122 aa).

The protein belongs to the universal ribosomal protein uL14 family. Part of the 50S ribosomal subunit. Forms a cluster with proteins L3 and L19. In the 70S ribosome, L14 and L19 interact and together make contacts with the 16S rRNA in bridges B5 and B8.

Its function is as follows. Binds to 23S rRNA. Forms part of two intersubunit bridges in the 70S ribosome. The polypeptide is Large ribosomal subunit protein uL14 (Erythrobacter litoralis (strain HTCC2594)).